A 115-amino-acid polypeptide reads, in one-letter code: U3-lycotoxin-Ls1k (115 aa).

A signal peptide spans M1–A20. The propeptide occupies E21 to R44. 4 disulfides stabilise this stretch: C48–C63, C55–C72, C62–C87, and C74–C85.

The protein belongs to the neurotoxin 19 (CSTX) family. 01 subfamily. Expressed by the venom gland.

It is found in the secreted. The chain is U3-lycotoxin-Ls1k from Lycosa singoriensis (Wolf spider).